We begin with the raw amino-acid sequence, 434 residues long: Serine hydroxymethyltransferase (434 aa).

Residues leucine 131 and 135–137 contribute to the (6S)-5,6,7,8-tetrahydrofolate site; that span reads GHL. Residue lysine 240 is modified to N6-(pyridoxal phosphate)lysine.

It belongs to the SHMT family. In terms of assembly, homodimer. The cofactor is pyridoxal 5'-phosphate.

It localises to the cytoplasm. The enzyme catalyses (6R)-5,10-methylene-5,6,7,8-tetrahydrofolate + glycine + H2O = (6S)-5,6,7,8-tetrahydrofolate + L-serine. It participates in one-carbon metabolism; tetrahydrofolate interconversion. It functions in the pathway amino-acid biosynthesis; glycine biosynthesis; glycine from L-serine: step 1/1. Catalyzes the reversible interconversion of serine and glycine with tetrahydrofolate (THF) serving as the one-carbon carrier. This reaction serves as the major source of one-carbon groups required for the biosynthesis of purines, thymidylate, methionine, and other important biomolecules. Also exhibits THF-independent aldolase activity toward beta-hydroxyamino acids, producing glycine and aldehydes, via a retro-aldol mechanism. This Gluconobacter oxydans (strain 621H) (Gluconobacter suboxydans) protein is Serine hydroxymethyltransferase.